A 434-amino-acid polypeptide reads, in one-letter code: UDP-N-acetylglucosamine 1-carboxyvinyltransferase (434 aa).

22–23 lines the phosphoenolpyruvate pocket; it reads KN. Arg97 serves as a coordination point for UDP-N-acetyl-alpha-D-glucosamine. The active-site Proton donor is Asp121. UDP-N-acetyl-alpha-D-glucosamine-binding residues include Asp319 and Met341.

This sequence belongs to the EPSP synthase family. MurA subfamily.

It localises to the cytoplasm. The enzyme catalyses phosphoenolpyruvate + UDP-N-acetyl-alpha-D-glucosamine = UDP-N-acetyl-3-O-(1-carboxyvinyl)-alpha-D-glucosamine + phosphate. The protein operates within cell wall biogenesis; peptidoglycan biosynthesis. In terms of biological role, cell wall formation. Adds enolpyruvyl to UDP-N-acetylglucosamine. In Bacteroides thetaiotaomicron (strain ATCC 29148 / DSM 2079 / JCM 5827 / CCUG 10774 / NCTC 10582 / VPI-5482 / E50), this protein is UDP-N-acetylglucosamine 1-carboxyvinyltransferase.